A 413-amino-acid chain; its full sequence is MTMEPRVLRREEWDSWYGSLIRAFGGVPEPAEELELFRELTRVDRSIGVWERDGEAEACVGTTGSFDFRMTVPGGAQVRAAGVTMVSVAATHRRRGVLTSMMRRQLDDVRAWGEPLAVLTASEPAIYGRFGYGAATFSLSAEIDTSRVRLSVPAGTDDVRLRYAAPADVLDACEAVYARLVPGRPGMLARRPGWERLALLDPESGRDGASPLQCVVARRGGEVTGFARFRVRPAWGPEGAGGTVVLDDLAGLDPATEAALWRFLYDVDLTSRLAVRGRPVDEAWQYQVSDIRRCRPESRDALYVRLVDVGAALAARTYQAPVDVVFEVEDAFCPWNAGRWRLSGDAKGASCERTSDGADLALSVRELGAAYLGGVRLSSLGAAGRVREVRAGALAEASVGFGSDVAPWLPHGF.

Residues 3–155 (MEPRVLRREE…SRVRLSVPAG (153 aa)) form the N-acetyltransferase domain. Acetyl-CoA is bound by residues 86-88 (VSV), 94-99 (RRGVLT), and 122-123 (SE). Tyr127 acts as the Proton donor in catalysis. The active-site Proton acceptor; via carboxylate is the Phe413.

Belongs to the acetyltransferase Eis family. In terms of assembly, homohexamer; trimer of dimers.

This is an uncharacterized protein from Streptomyces coelicolor (strain ATCC BAA-471 / A3(2) / M145).